A 359-amino-acid chain; its full sequence is D-alanine--D-alanine ligase (359 aa).

Residues 141–346 (KRIFKEAGLP…YSTLLDELIN (206 aa)) enclose the ATP-grasp domain. 172 to 227 (IEHLGYPCFVKPANLGSSVGITKVHNEEELPGALKLAAKYDRKLLIERGIDAREIE) is a binding site for ATP. Mg(2+)-binding residues include Asp299, Glu313, and Asn315.

It belongs to the D-alanine--D-alanine ligase family. Mg(2+) serves as cofactor. The cofactor is Mn(2+).

The protein resides in the cytoplasm. It carries out the reaction 2 D-alanine + ATP = D-alanyl-D-alanine + ADP + phosphate + H(+). It participates in cell wall biogenesis; peptidoglycan biosynthesis. Its function is as follows. Cell wall formation. The polypeptide is D-alanine--D-alanine ligase (Thermoanaerobacter pseudethanolicus (strain ATCC 33223 / 39E) (Clostridium thermohydrosulfuricum)).